A 348-amino-acid polypeptide reads, in one-letter code: Lipooligosaccharide heptosyltransferase 2 (348 aa).

The protein belongs to the glycosyltransferase 9 family.

It carries out the reaction an L-alpha-D-Hep-(1-&gt;5)-[alpha-Kdo-(2-&gt;4)]-alpha-Kdo-(2-&gt;6)-lipid A + ADP-L-glycero-beta-D-manno-heptose = an L-alpha-D-Hep-(1-&gt;3)-L-alpha-D-Hep-(1-&gt;5)-[alpha-Kdo-(2-&gt;4)]-alpha-Kdo-(2-&gt;6)-lipid A + ADP + H(+). It participates in bacterial outer membrane biogenesis; LOS core biosynthesis. Its function is as follows. Glycosyltransferase involved in the biosynthesis of the core oligosaccharide region of lipooligosaccharide (LOS). Catalyzes the addition of a heptose unit to the heptosyl-Kdo2-lipid A module. This chain is Lipooligosaccharide heptosyltransferase 2, found in Haemophilus ducreyi (strain 35000HP / ATCC 700724).